A 536-amino-acid chain; its full sequence is C-22 sterol desaturase ERG5A (536 aa).

A helical transmembrane segment spans residues 41 to 61; it reads VWTWVFTLVALCIAYDQIAYI. Cys-481 serves as a coordination point for heme.

This sequence belongs to the cytochrome P450 family. Heme is required as a cofactor.

Its subcellular location is the endoplasmic reticulum membrane. The enzyme catalyses 5-dehydroepisterol + NADPH + O2 + H(+) = ergosta-5,7,22,24(28)-tetraen-3beta-ol + NADP(+) + 2 H2O. It functions in the pathway steroid metabolism; ergosterol biosynthesis. In terms of biological role, C-22 sterol desaturase; part of the third module of ergosterol biosynthesis pathway that includes the late steps of the pathway. ERG5A and ERG5B convert 5-dehydroepisterol into ergosta-5,7,22,24(28)-tetraen-3beta-ol by forming the C-22(23) double bond in the sterol side chain. The third module or late pathway involves the ergosterol synthesis itself through consecutive reactions that mainly occur in the endoplasmic reticulum (ER) membrane. Firstly, the squalene synthase ERG9 catalyzes the condensation of 2 farnesyl pyrophosphate moieties to form squalene, which is the precursor of all steroids. Squalene synthase is crucial for balancing the incorporation of farnesyl diphosphate (FPP) into sterol and nonsterol isoprene synthesis. Secondly, squalene is converted into lanosterol by the consecutive action of the squalene epoxidase ERG1 and the lanosterol synthase ERG7. Then, the delta(24)-sterol C-methyltransferase ERG6 methylates lanosterol at C-24 to produce eburicol. Eburicol is the substrate of the sterol 14-alpha demethylase encoded by CYP51A, CYP51B and CYP51C, to yield 4,4,24-trimethyl ergosta-8,14,24(28)-trienol. CYP51B encodes the enzyme primarily responsible for sterol 14-alpha-demethylation, and plays an essential role in ascospore formation. CYP51A encodes an additional sterol 14-alpha-demethylase, induced on ergosterol depletion and responsible for the intrinsic variation in azole sensitivity. The third CYP51 isoform, CYP51C, does not encode a sterol 14-alpha-demethylase, but is required for full virulence on host wheat ears. The C-14 reductase ERG24 then reduces the C14=C15 double bond which leads to 4,4-dimethylfecosterol. A sequence of further demethylations at C-4, involving the C-4 demethylation complex containing the C-4 methylsterol oxidases ERG25, the sterol-4-alpha-carboxylate 3-dehydrogenase ERG26 and the 3-keto-steroid reductase ERG27, leads to the production of fecosterol via 4-methylfecosterol. ERG28 has a role as a scaffold to help anchor ERG25, ERG26 and ERG27 to the endoplasmic reticulum. The C-8 sterol isomerase ERG2 then catalyzes the reaction which results in unsaturation at C-7 in the B ring of sterols and thus converts fecosterol to episterol. The sterol-C5-desaturases ERG3A and ERG3BB then catalyze the introduction of a C-5 double bond in the B ring to produce 5-dehydroepisterol. The C-22 sterol desaturases ERG5A and ERG5B further convert 5-dehydroepisterol into ergosta-5,7,22,24(28)-tetraen-3beta-ol by forming the C-22(23) double bond in the sterol side chain. Finally, ergosta-5,7,22,24(28)-tetraen-3beta-ol is substrate of the C-24(28) sterol reductase ERG4 to produce ergosterol. This Gibberella zeae (strain ATCC MYA-4620 / CBS 123657 / FGSC 9075 / NRRL 31084 / PH-1) (Wheat head blight fungus) protein is C-22 sterol desaturase ERG5A.